The following is a 426-amino-acid chain: GTPase HflX (426 aa).

The region spanning 198-365 (PTVSLVGYTN…ALTERLSGEV (168 aa)) is the Hflx-type G domain. GTP is bound by residues 204-211 (GYTNAGKS), 229-233 (FATLD), 251-254 (DTVG), 317-320 (NKID), and 343-345 (SAQ). Residues Ser211 and Thr231 each contribute to the Mg(2+) site.

Belongs to the TRAFAC class OBG-HflX-like GTPase superfamily. HflX GTPase family. As to quaternary structure, monomer. Associates with the 50S ribosomal subunit. This interaction occurs in the presence of GTP, GDP, ATP or ADP, but not in their absence. Mg(2+) serves as cofactor.

The protein localises to the cytoplasm. Intrinsic GTPase activity is very slow and can be stimulated by the presence of 50S ribosomal subunits or 70S ribosomes. GTPase activity is inhibited by ATP. In terms of biological role, GTPase that associates with the 50S ribosomal subunit and may have a role during protein synthesis or ribosome biogenesis. In vitro, also exhibits ATPase activity. This is GTPase HflX from Escherichia coli (strain K12).